The primary structure comprises 395 residues: Chorismate synthase (395 aa).

2 residues coordinate NADP(+): Arg-40 and Arg-46. FMN is bound by residues 137–139 (RSS), Gly-308, 323–327 (KPLPT), and Arg-349.

Belongs to the chorismate synthase family. Homotetramer. The cofactor is FMNH2.

The catalysed reaction is 5-O-(1-carboxyvinyl)-3-phosphoshikimate = chorismate + phosphate. The protein operates within metabolic intermediate biosynthesis; chorismate biosynthesis; chorismate from D-erythrose 4-phosphate and phosphoenolpyruvate: step 7/7. Catalyzes the anti-1,4-elimination of the C-3 phosphate and the C-6 proR hydrogen from 5-enolpyruvylshikimate-3-phosphate (EPSP) to yield chorismate, which is the branch point compound that serves as the starting substrate for the three terminal pathways of aromatic amino acid biosynthesis. This reaction introduces a second double bond into the aromatic ring system. The sequence is that of Chorismate synthase from Gloeobacter violaceus (strain ATCC 29082 / PCC 7421).